We begin with the raw amino-acid sequence, 441 residues long: Ribosomal protein uS12 methylthiotransferase RimO (441 aa).

An MTTase N-terminal domain is found at 7 to 117 (PKISFVSLGC…VLEAVHRAKP (111 aa)). Residues cysteine 16, cysteine 52, cysteine 81, cysteine 148, cysteine 152, and cysteine 155 each contribute to the [4Fe-4S] cluster site. A Radical SAM core domain is found at 134–371 (LTPRHYAYLK…MARQQVISAR (238 aa)). The TRAM domain maps to 374–440 (KRKVGTRQQI…AYDLHGTVAG (67 aa)).

Belongs to the methylthiotransferase family. RimO subfamily. [4Fe-4S] cluster serves as cofactor.

It is found in the cytoplasm. It carries out the reaction L-aspartate(89)-[ribosomal protein uS12]-hydrogen + (sulfur carrier)-SH + AH2 + 2 S-adenosyl-L-methionine = 3-methylsulfanyl-L-aspartate(89)-[ribosomal protein uS12]-hydrogen + (sulfur carrier)-H + 5'-deoxyadenosine + L-methionine + A + S-adenosyl-L-homocysteine + 2 H(+). In terms of biological role, catalyzes the methylthiolation of an aspartic acid residue of ribosomal protein uS12. The polypeptide is Ribosomal protein uS12 methylthiotransferase RimO (Rhodopseudomonas palustris (strain BisB5)).